Consider the following 661-residue polypeptide: Sperm transmembrane protein 9 (661 aa).

The N-terminal stretch at 1 to 16 (MNVILVLVVLFFAGDC) is a signal peptide. The Extracellular segment spans residues 17-618 (AKIRKIIDFL…MTNRLMKNYE (602 aa)). An EGF-like 1 domain is found at 52–90 (NFNPCLENPKICSNRGKCLHENGNFYCICPVTHYGKTCE). 3 disulfide bridges follow: Cys56–Cys69, Cys63–Cys78, and Cys80–Cys89. 4 N-linked (GlcNAc...) asparagine glycosylation sites follow: Asn105, Asn106, Asn134, and Asn190. Residues 210-259 (QISACFDTQCDNGGICEDVVDWKTKTVTATCKCPSAIELIGGTVTGENCE) enclose the EGF-like 2 domain. 3 disulfide bridges follow: Cys214–Cys225, Cys219–Cys240, and Cys242–Cys258. Asn279, Asn290, Asn316, and Asn338 each carry an N-linked (GlcNAc...) asparagine glycan. Positions 377-379 (RGD) match the Cell attachment site motif. 3 consecutive EGF-like domains span residues 377-414 (RGDRWDEKCTDSQHGACVDISGVAHCVCKPDYTGEKCE), 519-557 (HTNPCYQNLCQNSATCHIDPKQRSYDCQCVNGTRGSLCE), and 559-600 (VDDS…LDCN). Intrachain disulfides connect Cys385-Cys402, Cys393-Cys404, Cys413-Cys419, Cys523-Cys534, Cys528-Cys545, Cys547-Cys556, Cys563-Cys576, Cys571-Cys588, and Cys590-Cys599. N-linked (GlcNAc...) asparagine glycosylation occurs at Asn549. The chain crosses the membrane as a helical span at residues 619 to 639 (FSLPLVACFVSLAILLPVIVI). Over 640–661 (SRRRQGRVEEAKKTSEVKTENP) the chain is Cytoplasmic.

As to expression, expressed in spermatids, during spermogenesis expression is primarily localized to the pseudopod.

The protein resides in the cytoplasm. It localises to the membrane. Its function is as follows. Required for fertilization. May be required for cell adhesion and/or function as a signaling molecule. This Caenorhabditis elegans protein is Sperm transmembrane protein 9 (spe-9).